The following is a 30-amino-acid chain: Conotoxin TVIIA (30 aa).

3 cysteine pairs are disulfide-bonded: Cys-2–Cys-14, Cys-9–Cys-19, and Cys-13–Cys-24. Residues Pro-10 and Pro-11 each carry the 4-hydroxyproline modification.

In terms of processing, three different forms of TVIIA exist. Pro-10 and Pro-11 of conotoxin TVIIA are hydroxylated in TVIIA, whereas Pro-10 is not hydroxylated in [Pro10]TVIIA and neither Pro-10 nor Pro-11 are hydroxylated in [Pro10,11]TVIIA. Expressed by the venom duct.

It is found in the secreted. Functionally, by structural similarity with conotoxin GS, may inhibit the sodium channel (Nav). No effect was observed upon intracranial injections into mice and intraperitoneal injections into goldfish (25 ug). In Conus tulipa (Fish-hunting cone snail), this protein is Conotoxin TVIIA.